We begin with the raw amino-acid sequence, 643 residues long: ATP-dependent RNA helicase DeaD (643 aa).

The Q motif signature appears at 6–34; the sequence is TTFADLGLKAPILEALTDLGYEKPSPIQA. The Helicase ATP-binding domain occupies 37–208; that stretch reads IPHLLDGRDV…RRFMKEPQEV (172 aa). Residue 50–57 participates in ATP binding; it reads AQTGSGKT. Residues 156 to 159 carry the DEAD box motif; that stretch reads DEAD. One can recognise a Helicase C-terminal domain in the interval 232–379; the sequence is KNEALVRFLE…EVELPNAELL (148 aa). Disordered stretches follow at residues 440–482 and 557–643; these read VPPV…KRER and MNMQ…GGDA. Composition is skewed to basic and acidic residues over residues 448 to 482 and 567 to 643; these read PRREFRDRDDSFDRRGDRNDRGPRGDREDRPKRER and PRTE…GGDA.

Belongs to the DEAD box helicase family. DeaD/CsdA subfamily.

Its subcellular location is the cytoplasm. The enzyme catalyses ATP + H2O = ADP + phosphate + H(+). In terms of biological role, DEAD-box RNA helicase involved in various cellular processes at low temperature, including ribosome biogenesis, mRNA degradation and translation initiation. This Klebsiella pneumoniae protein is ATP-dependent RNA helicase DeaD.